A 119-amino-acid chain; its full sequence is MALSKRELFQKRRLRNRNKMRKMANGRARLSVHRSNKNISVQLIDDLNGVTLASASSLEPSLGVVGKNNVEASAKIGEAIAERAKKAGVEECYFDRGGFLFHGRVKALADAAREGGLKF.

The protein belongs to the universal ribosomal protein uL18 family. As to quaternary structure, part of the 50S ribosomal subunit; part of the 5S rRNA/L5/L18/L25 subcomplex. Contacts the 5S and 23S rRNAs.

This is one of the proteins that bind and probably mediate the attachment of the 5S RNA into the large ribosomal subunit, where it forms part of the central protuberance. In Jannaschia sp. (strain CCS1), this protein is Large ribosomal subunit protein uL18.